A 135-amino-acid chain; its full sequence is Small ribosomal subunit protein bS16 (135 aa).

A disordered region spans residues 82 to 135 (RPAETVGKAKQAAKREADAKQAAKEAAEAKAAAADEKAAEAEASDSAESESTEG). The segment covering 94 to 121 (AKREADAKQAAKEAAEAKAAAADEKAAE) has biased composition (basic and acidic residues). The span at 123–135 (EASDSAESESTEG) shows a compositional bias: acidic residues.

This sequence belongs to the bacterial ribosomal protein bS16 family.

The protein is Small ribosomal subunit protein bS16 of Synechococcus sp. (strain CC9605).